A 345-amino-acid polypeptide reads, in one-letter code: Leucine-rich repeat and transmembrane domain-containing protein 1 (345 aa).

The signal sequence occupies residues 1-27; it reads MKGELLLFSSVIVLLQVVCSCPDKCYC. Positions 28–50 constitute an LRRNT domain; sequence QSSTNFVDCSQQGLAEIPSHLPP. Topologically, residues 28-288 are extracellular; that stretch reads QSSTNFVDCS…PANLRHAIAT (261 aa). LRR repeat units follow at residues 51 to 72, 75 to 96, 99 to 120, 123 to 144, and 147 to 168; these read QTRTLHLQDNQIHHLPAFAFRS, WLMTLNLSNNSLSNLAPGAFHG, HLQVLNLTQNSLLSLESRLFHS, QLRELDLSSNNISHLPTSLGET, and NLTILAVQQNQLQQLDRALLES. The N-linked (GlcNAc...) asparagine glycan is linked to N104. Residue N147 is glycosylated (N-linked (GlcNAc...) asparagine). An LRRCT domain is found at 180 to 234; the sequence is NLWKCNCHLLGLKLWLEKFVYKGGLTDGIICESPDTWKGKDLLRIPHELYQPCPL. A helical transmembrane segment spans residues 289–309; the sequence is VIITGVVCGIVCLMMLAAAIY. Residues 310–345 are Cytoplasmic-facing; it reads GCTYAAITAQYHGGPLAQTNDPGKVEEKERFDSSPA. Residues 326–345 form a disordered region; the sequence is AQTNDPGKVEEKERFDSSPA. The segment covering 332–345 has biased composition (basic and acidic residues); it reads GKVEEKERFDSSPA.

It localises to the membrane. The chain is Leucine-rich repeat and transmembrane domain-containing protein 1 (LRTM1) from Homo sapiens (Human).